The chain runs to 249 residues: Microvitellogenin (249 aa).

Positions 1-17 (MLRTTVVLLTLAAIAFA) are cleaved as a signal peptide.

Its function is as follows. Small vitellogenic protein found in females. It is synthesized in the fat body, secreted into the hemolymph, and taken up by developing oocytes. The protein is Microvitellogenin (MVG) of Manduca sexta (Tobacco hawkmoth).